Consider the following 72-residue polypeptide: Large ribosomal subunit protein bL28 (72 aa).

The protein belongs to the bacterial ribosomal protein bL28 family.

This chain is Large ribosomal subunit protein bL28, found in Chlorobium luteolum (strain DSM 273 / BCRC 81028 / 2530) (Pelodictyon luteolum).